The chain runs to 679 residues: MAKTTPSSPSAAAAAELVVKSVNTIRFLAIDAVENVKSGHPGMPMGCAPMGHVLFDEFMKFNPKNPYWFNRDRFVLSAGHGAMLLYGLLHLAGYDSVKVEDLKGLRQWGSKTPAHPENFETPGVEVTTGPLGQGVGSAVGLALAEKHLGARYNKPDFEMVDHYTYMILGDGCQMEGISNEASSLAAHWGLGKLIALYDDNHITIDGDTDLAFTEDVGKRFEALGWHVLTVANGNDGYDEIREAIKVAKSVTDKPTLIKVATTIGFGSPNKANTYGVHGNALGPKEAEATRQNLGWPYETFHVPDDVKKHWSRHISEGAELESAWNAKFAEYEKKYPKEAAELKSIITGELPLGWEKALPTYTPESPGNPTRTLSHQNLNAVAAVLPGLIGGSADLTASNMAFLKSSGDFQKETPTGRNLKFGAREHGMGAICNGVALHSPGLVPFSATYFVFTDYMRAAIRIAALSKARVVYIMTHDSIGLGEDGPTHQPVEHLASFRAMPNILVLRPADGNETAGAYKVAVENAGRPSILSLSRQKLPQLPGTSVEGVGRGGYVISDNSKDGEKPEVILMGTGSELEIAARAGEELRKEGKKVRVVSLVSWELFGEQSKEYKEMVLPSEVTARVSVEAGSTFGWERFVGLKGRAVGIDRFGASASAERLYKEFGITVEAVVAAAKELC.

Substrate is bound at residue H40. Thiamine diphosphate contacts are provided by residues H80 and 129 to 131 (GPL). D170 is a binding site for Mg(2+). G171 and N200 together coordinate thiamine diphosphate. Residues N200 and I202 each coordinate Mg(2+). Substrate-binding residues include H277, R371, and S398. Residue H277 participates in thiamine diphosphate binding. 2 residues coordinate thiamine diphosphate: E425 and F452. The active-site Proton donor is the E425. 3 residues coordinate substrate: H476, D484, and R535.

The protein belongs to the transketolase family. As to quaternary structure, homodimer. It depends on Mg(2+) as a cofactor. Ca(2+) serves as cofactor. Mn(2+) is required as a cofactor. The cofactor is Co(2+). Requires thiamine diphosphate as cofactor. As to expression, leaves.

It catalyses the reaction D-sedoheptulose 7-phosphate + D-glyceraldehyde 3-phosphate = aldehydo-D-ribose 5-phosphate + D-xylulose 5-phosphate. Its function is as follows. Could be involved in the conversion of sugars, which are a major phenomenon in the rehydration process. In terms of biological role, catalyzes the transfer of a two-carbon ketol group from a ketose donor to an aldose acceptor, via a covalent intermediate with the cofactor thiamine pyrophosphate. The protein is Transketolase 10 (TKT10) of Craterostigma plantagineum (Blue gem).